The chain runs to 128 residues: DELTA-urthionin-Uf1a (128 aa).

The N-terminal stretch at 1 to 24 (MEGKTVIVSLLLLSIVVGQIQVEA) is a signal peptide. Disulfide bonds link Cys-27-Cys-64, Cys-28-Cys-56, and Cys-40-Cys-50. Positions 67–128 (LSIPEVTGEA…LCTKNSIETA (62 aa)) are cleaved as a propeptide — acidic domain.

This sequence belongs to the plant thionin (TC 1.C.44) family. In terms of tissue distribution, expressed in trichomes, that are stiff epidermal hairs located on the surface of petioles and leaves.

The protein localises to the secreted. Plant defense protein that causes pain by probable disruption of cell membranes. Shows cytotoxic activity against the neuroblastoma cell line SH-SY5Y and slightly weaker activity against several non-neuronal cell lines. In vivo, intraplantar injection into mice causes several nocifensive responses, along with swelling and redness. In Urtica ferox (Tree nettle), this protein is DELTA-urthionin-Uf1a.